We begin with the raw amino-acid sequence, 244 residues long: Mono-ADP-ribosyltransferase C3 (244 aa).

Residues 1–40 form the signal peptide; it reads MKGIRKSILCLVLSAGVIAPVTTSIVQSPQKCYACTVDKG. Positions 44–244 constitute a TR mART core domain; sequence DTFTEFTNVE…QIMITAMIFK (201 aa). Residues threonine 80, asparagine 87, arginine 91, 128–131, and 167–169 each bind NAD(+); these read RGDD and RTE. Residue arginine 128 is part of the active site. Residue serine 174 is part of the active site. NAD(+) contacts are provided by residues 182-185 and 211-213; these read FGGR and QLE. Residue glutamate 213 is part of the active site.

The protein to exoenzymes 3 of C.limosum and C.botulinum D phage, and to S.aureus ediN. Monomer.

The protein localises to the secreted. The enzyme catalyses L-asparaginyl-[protein] + NAD(+) = N(4)-(ADP-D-ribosyl)-L-asparaginyl-[protein] + nicotinamide + H(+). In terms of biological role, ADP-ribosylates eukaryotic Rho and Rac proteins on an asparagine residue. The polypeptide is Mono-ADP-ribosyltransferase C3 (Clostridium botulinum C phage (Clostridium botulinum C bacteriophage)).